A 98-amino-acid chain; its full sequence is UPF0235 protein Mmc1_3654 (98 aa).

The protein belongs to the UPF0235 family.

The chain is UPF0235 protein Mmc1_3654 from Magnetococcus marinus (strain ATCC BAA-1437 / JCM 17883 / MC-1).